The primary structure comprises 573 residues: Urease subunit alpha (573 aa).

The 438-residue stretch at 136–573 (GAIDCHVHFI…LPMAQRYFLF (438 aa)) folds into the Urease domain. The Ni(2+) site is built by H141, H143, and K224. K224 is modified (N6-carboxylysine). A substrate-binding site is contributed by H226. Ni(2+) is bound by residues H253 and H279. H327 functions as the Proton donor in the catalytic mechanism. D367 is a binding site for Ni(2+).

It belongs to the metallo-dependent hydrolases superfamily. Urease alpha subunit family. In terms of assembly, heterotrimer of UreA (gamma), UreB (beta) and UreC (alpha) subunits. Three heterotrimers associate to form the active enzyme. The cofactor is Ni cation. Post-translationally, carboxylation allows a single lysine to coordinate two nickel ions.

It localises to the cytoplasm. The enzyme catalyses urea + 2 H2O + H(+) = hydrogencarbonate + 2 NH4(+). It functions in the pathway nitrogen metabolism; urea degradation; CO(2) and NH(3) from urea (urease route): step 1/1. The chain is Urease subunit alpha from Nocardia farcinica (strain IFM 10152).